Reading from the N-terminus, the 333-residue chain is Phosphate acyltransferase (333 aa).

Belongs to the PlsX family. As to quaternary structure, homodimer. Probably interacts with PlsY.

The protein resides in the cytoplasm. It catalyses the reaction a fatty acyl-[ACP] + phosphate = an acyl phosphate + holo-[ACP]. It participates in lipid metabolism; phospholipid metabolism. Its function is as follows. Catalyzes the reversible formation of acyl-phosphate (acyl-PO(4)) from acyl-[acyl-carrier-protein] (acyl-ACP). This enzyme utilizes acyl-ACP as fatty acyl donor, but not acyl-CoA. The sequence is that of Phosphate acyltransferase from Aliarcobacter butzleri (strain RM4018) (Arcobacter butzleri).